We begin with the raw amino-acid sequence, 364 residues long: Probable dual-specificity RNA methyltransferase RlmN (364 aa).

Glutamate 106 acts as the Proton acceptor in catalysis. A Radical SAM core domain is found at 112–350; sequence YPRRNTVCIS…SCTVRDTRGR (239 aa). Cysteine 119 and cysteine 356 form a disulfide bridge. [4Fe-4S] cluster is bound by residues cysteine 126, cysteine 130, and cysteine 133. Residues 177–178, serine 211, 234–236, and asparagine 313 contribute to the S-adenosyl-L-methionine site; these read GE and SLH. The active-site S-methylcysteine intermediate is the cysteine 356.

This sequence belongs to the radical SAM superfamily. RlmN family. It depends on [4Fe-4S] cluster as a cofactor.

It is found in the cytoplasm. The enzyme catalyses adenosine(2503) in 23S rRNA + 2 reduced [2Fe-2S]-[ferredoxin] + 2 S-adenosyl-L-methionine = 2-methyladenosine(2503) in 23S rRNA + 5'-deoxyadenosine + L-methionine + 2 oxidized [2Fe-2S]-[ferredoxin] + S-adenosyl-L-homocysteine. The catalysed reaction is adenosine(37) in tRNA + 2 reduced [2Fe-2S]-[ferredoxin] + 2 S-adenosyl-L-methionine = 2-methyladenosine(37) in tRNA + 5'-deoxyadenosine + L-methionine + 2 oxidized [2Fe-2S]-[ferredoxin] + S-adenosyl-L-homocysteine. In terms of biological role, specifically methylates position 2 of adenine 2503 in 23S rRNA and position 2 of adenine 37 in tRNAs. The polypeptide is Probable dual-specificity RNA methyltransferase RlmN (Mycobacterium bovis (strain ATCC BAA-935 / AF2122/97)).